Here is a 353-residue protein sequence, read N- to C-terminus: uncharacterized protein (353 aa).

This sequence belongs to the MG067/MG068/MG395 family.

This is an uncharacterized protein from Mycoplasma pneumoniae (strain ATCC 29342 / M129 / Subtype 1) (Mycoplasmoides pneumoniae).